The sequence spans 648 residues: Beta-glucuronidase (648 aa).

Residues 1–22 (MSLKWSACWVALGQLLCSCALA) form the signal peptide. 2 N-linked (GlcNAc...) asparagine glycosylation sites follow: asparagine 172 and asparagine 416. Glutamate 447 (proton donor) is an active-site residue. An N-linked (GlcNAc...) asparagine glycan is attached at asparagine 627.

The protein belongs to the glycosyl hydrolase 2 family. Homotetramer.

It is found in the lysosome. Its subcellular location is the endoplasmic reticulum. It catalyses the reaction a beta-D-glucuronoside + H2O = D-glucuronate + an alcohol. Inhibited by L-aspartic acid. Functionally, plays an important role in the degradation of dermatan and keratan sulfates. This chain is Beta-glucuronidase (Gusb), found in Mus musculus (Mouse).